The chain runs to 180 residues: NADH-quinone oxidoreductase subunit I (180 aa).

4Fe-4S ferredoxin-type domains lie at 46-80 (GRIV…LQKT) and 90-119 (EFFR…LTPD). Cys60, Cys63, Cys66, Cys70, Cys99, Cys102, Cys105, and Cys109 together coordinate [4Fe-4S] cluster.

This sequence belongs to the complex I 23 kDa subunit family. As to quaternary structure, NDH-1 is composed of 14 different subunits. Subunits NuoA, H, J, K, L, M, N constitute the membrane sector of the complex. It depends on [4Fe-4S] cluster as a cofactor.

The protein localises to the cell membrane. It catalyses the reaction a quinone + NADH + 5 H(+)(in) = a quinol + NAD(+) + 4 H(+)(out). NDH-1 shuttles electrons from NADH, via FMN and iron-sulfur (Fe-S) centers, to quinones in the respiratory chain. The immediate electron acceptor for the enzyme in this species is believed to be ubiquinone. Couples the redox reaction to proton translocation (for every two electrons transferred, four hydrogen ions are translocated across the cytoplasmic membrane), and thus conserves the redox energy in a proton gradient. This is NADH-quinone oxidoreductase subunit I from Baumannia cicadellinicola subsp. Homalodisca coagulata.